The following is a 77-amino-acid chain: Translation initiation factor IF-1, chloroplastic (77 aa).

The region spanning 1–71 (MKEQKLIHEG…TRGRIIYRLR (71 aa)) is the S1-like domain.

It belongs to the IF-1 family. Component of the 30S ribosomal translation pre-initiation complex which assembles on the 30S ribosome in the order IF-2 and IF-3, IF-1 and N-formylmethionyl-tRNA(fMet); mRNA recruitment can occur at any time during PIC assembly.

The protein resides in the plastid. Its subcellular location is the chloroplast. One of the essential components for the initiation of protein synthesis. Stabilizes the binding of IF-2 and IF-3 on the 30S subunit to which N-formylmethionyl-tRNA(fMet) subsequently binds. Helps modulate mRNA selection, yielding the 30S pre-initiation complex (PIC). Upon addition of the 50S ribosomal subunit IF-1, IF-2 and IF-3 are released leaving the mature 70S translation initiation complex. In Asarum canadense (Wild ginger), this protein is Translation initiation factor IF-1, chloroplastic.